We begin with the raw amino-acid sequence, 262 residues long: Putative hydro-lyase Sca_2211 (262 aa).

It belongs to the D-glutamate cyclase family.

The chain is Putative hydro-lyase Sca_2211 from Staphylococcus carnosus (strain TM300).